The following is a 450-amino-acid chain: Bifunctional protein GlmU (450 aa).

The interval 1-226 is pyrophosphorylase; it reads MLAVAVLAAG…PDEVNGINNR (226 aa). Residues 7–10, lysine 21, glutamine 73, and 78–79 each bind UDP-N-acetyl-alpha-D-glucosamine; these read LAAG and GT. Mg(2+) is bound at residue aspartate 103. Residues glycine 140, glutamate 155, asparagine 170, and asparagine 224 each contribute to the UDP-N-acetyl-alpha-D-glucosamine site. Residue asparagine 224 coordinates Mg(2+). The linker stretch occupies residues 227 to 247; it reads QQLAQCETMLQERLRHHWMAE. The segment at 248–450 is N-acetyltransferase; that stretch reads GVTFVDPASC…IKENWAGPQG (203 aa). UDP-N-acetyl-alpha-D-glucosamine contacts are provided by arginine 329 and lysine 347. Catalysis depends on histidine 359, which acts as the Proton acceptor. UDP-N-acetyl-alpha-D-glucosamine contacts are provided by tyrosine 362 and asparagine 373. Acetyl-CoA is bound by residues alanine 376, 382 to 383, alanine 419, and arginine 436; that span reads NY.

The protein in the N-terminal section; belongs to the N-acetylglucosamine-1-phosphate uridyltransferase family. In the C-terminal section; belongs to the transferase hexapeptide repeat family. As to quaternary structure, homotrimer. Mg(2+) serves as cofactor.

The protein resides in the cytoplasm. The enzyme catalyses alpha-D-glucosamine 1-phosphate + acetyl-CoA = N-acetyl-alpha-D-glucosamine 1-phosphate + CoA + H(+). It catalyses the reaction N-acetyl-alpha-D-glucosamine 1-phosphate + UTP + H(+) = UDP-N-acetyl-alpha-D-glucosamine + diphosphate. The protein operates within nucleotide-sugar biosynthesis; UDP-N-acetyl-alpha-D-glucosamine biosynthesis; N-acetyl-alpha-D-glucosamine 1-phosphate from alpha-D-glucosamine 6-phosphate (route II): step 2/2. It functions in the pathway nucleotide-sugar biosynthesis; UDP-N-acetyl-alpha-D-glucosamine biosynthesis; UDP-N-acetyl-alpha-D-glucosamine from N-acetyl-alpha-D-glucosamine 1-phosphate: step 1/1. It participates in bacterial outer membrane biogenesis; LPS lipid A biosynthesis. Catalyzes the last two sequential reactions in the de novo biosynthetic pathway for UDP-N-acetylglucosamine (UDP-GlcNAc). The C-terminal domain catalyzes the transfer of acetyl group from acetyl coenzyme A to glucosamine-1-phosphate (GlcN-1-P) to produce N-acetylglucosamine-1-phosphate (GlcNAc-1-P), which is converted into UDP-GlcNAc by the transfer of uridine 5-monophosphate (from uridine 5-triphosphate), a reaction catalyzed by the N-terminal domain. The polypeptide is Bifunctional protein GlmU (Synechococcus sp. (strain RCC307)).